Consider the following 592-residue polypeptide: MATCWQALWAYRSYLIVFFVPILLLPLPILVPSKEAYCAYAIILMALFWCTEALPLAVTALFPLILFPMMGIVDASEVAVEYLKDSNLLFFGGLLVAIAVEHWNLHKRIALRVLLIVGVRPAPLILGFMLVTAFLSMWISNTATSAMMVPIAHAVLDQLHSSQASSNVEEGSNNPTFELQEPSPQKEVTKLDNGQALPVTSASSEGRAHLSQKHLHLTQCMSLCVCYSASIGGIATLTGTAPNLVLQGQINSLFPQNGNVVNFASWFSFAFPTMVILLLLAWLWLQILFLGFNFRKNFGIGEKMQEQQQAAYCVIQTEHRLLGPMTFAEKAISILFVILVLLWFTREPGFFLGWGNLAFPNAKGESMVSDGTVAIFIGIIMFIIPSKFPGLTQDPENPGKLKAPLGLLDWKTVNQKMPWNIVLLLGGGYALAKGSERSGLSEWLGNKLTPLQSVPAPAIAIILSLLVATFTECTSNVATTTIFLPILASMAQAICLHPLYVMLPCTLATSLAFMLPVATPPNAIVFSFGDLKVLDMARAGFLLNIIGVLIIALAINSWGIPLFSLHSFPSWAQSNTTAQCLPSLANTTTPSP.

4 helical membrane passes run 13-33 (SYLI…LVPS), 53-73 (ALPL…MGIV), 86-106 (SNLL…WNLH), and 114-134 (LLIV…VTAF). Polar residues predominate over residues 165 to 177 (SSNVEEGSNNPTF). The tract at residues 165 to 185 (SSNVEEGSNNPTFELQEPSPQ) is disordered. A run of 8 helical transmembrane segments spans residues 221-241 (MSLC…TGTA), 274-294 (MVIL…GFNF), 324-344 (PMTF…LLWF), 371-391 (GTVA…FPGL), 450-470 (PLQS…VATF), 482-502 (IFLP…LYVM), 511-531 (LAFM…FGDL), and 545-565 (IIGV…LFSL).

Belongs to the SLC13A/DASS transporter (TC 2.A.47) family. NADC subfamily. Expressed in kidney and intestine. In kidney expressed in the proximal tubule (at protein level).

It is found in the apical cell membrane. It catalyses the reaction succinate(out) + 3 Na(+)(out) = succinate(in) + 3 Na(+)(in). It carries out the reaction fumarate(out) + 3 Na(+)(out) = fumarate(in) + 3 Na(+)(in). The enzyme catalyses 2-oxoglutarate(out) + 3 Na(+)(out) = 2-oxoglutarate(in) + 3 Na(+)(in). Its activity is regulated as follows. Li(+) decreases succinate transport in the presence of Na(+), by competing at one of the three cation binding sites. Functionally, low-affinity sodium-dicarboxylate cotransporter, that mediates the entry of citric acid cycle intermediates, such as succinate, citrate, fumarate and alpha-ketoglutarate (2-oxoglutarate) into the small intestine and renal proximal tubule. Transports the dicarboxylate into the cell with a probable stoichiometry of 3 Na(+) for 1 divalent dicarboxylate, rendering the process electrogenic. Citrate is transported in protonated form as a divalent anion, rather than the trivalent form which is normally found in blood. Has a critical role in renal dicarboxylate transport. This chain is Solute carrier family 13 member 2 (SLC13A2), found in Homo sapiens (Human).